Here is a 106-residue protein sequence, read N- to C-terminus: Large ribosomal subunit protein eL34 (106 aa).

The protein belongs to the eukaryotic ribosomal protein eL34 family.

The protein is Large ribosomal subunit protein eL34 of Hyperthermus butylicus (strain DSM 5456 / JCM 9403 / PLM1-5).